A 424-amino-acid polypeptide reads, in one-letter code: Kynureninase (424 aa).

Pyridoxal 5'-phosphate-binding positions include L105, S106, 133-136 (FPTD), D218, H221, and Y243. K244 is modified (N6-(pyridoxal phosphate)lysine). Residues W274 and N302 each coordinate pyridoxal 5'-phosphate.

This sequence belongs to the kynureninase family. Homodimer. Pyridoxal 5'-phosphate serves as cofactor.

The catalysed reaction is L-kynurenine + H2O = anthranilate + L-alanine + H(+). It carries out the reaction 3-hydroxy-L-kynurenine + H2O = 3-hydroxyanthranilate + L-alanine + H(+). It functions in the pathway amino-acid degradation; L-kynurenine degradation; L-alanine and anthranilate from L-kynurenine: step 1/1. It participates in cofactor biosynthesis; NAD(+) biosynthesis; quinolinate from L-kynurenine: step 2/3. Catalyzes the cleavage of L-kynurenine (L-Kyn) and L-3-hydroxykynurenine (L-3OHKyn) into anthranilic acid (AA) and 3-hydroxyanthranilic acid (3-OHAA), respectively. The protein is Kynureninase of Stenotrophomonas maltophilia (strain K279a).